A 950-amino-acid polypeptide reads, in one-letter code: F-box only protein 10 (950 aa).

An F-box domain is found at 1–48 (METGGLPLELWRMILAYLHLPDLGRCSLVCRAWYELILSLDSTRWRQL). PbH1 repeat units follow at residues 198–217 (SGHI…QVHG) and 238–260 (VPLC…TVEG). A disordered region spans residues 313–364 (IEGSQSPTSPVCSSPKPGSKEAEVGSDGERVAQTPDSSDGGLSPSGEDEDDE). Polar residues predominate over residues 315-324 (GSQSPTSPVC). 2 positions are modified to phosphoserine: S321 and S326. Over residues 330-342 (GSKEAEVGSDGER) the composition is skewed to basic and acidic residues. Over residues 347–357 (PDSSDGGLSPS) the composition is skewed to low complexity. 15 PbH1 repeats span residues 423–444 (VQGC…FVCS), 467–489 (NSKI…FLRL), 490–512 (EGGG…DIRK), 513–535 (KSNP…VVLG), 536–558 (NGKG…YILY), 559–581 (HGNP…AVNE), 582–604 (NGKG…DIRR), 605–627 (GGVP…VVGD), 628–650 (EGKG…WMMS), 651–673 (SSLP…AVFS), 713–735 (ITVA…FVQS), 736–758 (SEAL…TIVQ), 760–782 (SQLT…KVEF), 783–805 (QCKV…ITKG), and 828–850 (RSDT…AVRG).

As to quaternary structure, component of the SCF(FBXO10) complex consisting of CUL1, SKP1 and FBXO10. Interacts with BCL2. Interacts with PRDM1. In terms of tissue distribution, particularly highly expressed in B-cells.

The protein resides in the cytoplasm. It participates in protein modification; protein ubiquitination. Its function is as follows. Substrate-recognition component of the SCF (SKP1-CUL1-F-box protein)-type E3 ubiquitin ligase complex. Mediates the ubiquitination and degradation of BCL2, an antiapoptotic protein, thereby playing a role in apoptosis by controlling the stability of BCL2. Targets also the receptor for advanced glycation end products RAGE for ubiquitination and subsequent lysosomal degradation. Directly controls HGAL/GCSAM ubiquitination and degradation and thereby decreases BCR signaling. This is F-box only protein 10 (Fbxo10) from Mus musculus (Mouse).